The chain runs to 699 residues: Conditioned medium factor (699 aa).

The N-terminal stretch at 1-18 is a signal peptide; the sequence is MRLLLLLILIITINFSYG. N-linked (GlcNAc...) asparagine glycans are attached at residues Asn130, Asn283, Asn346, and Asn430. A disordered region spans residues 680 to 699; sequence SPQQTTNTEYNKEMSSNSVW.

N- and O-glycosylated. In terms of processing, the N-terminus is blocked.

Functionally, involved in cell density sensing and might synchronize the onset of development by triggering aggregation when a majority of the cells in a given area have starved. This is Conditioned medium factor (cmfA) from Dictyostelium discoideum (Social amoeba).